The primary structure comprises 75 residues: Small ribosomal subunit protein bS18 (75 aa).

This sequence belongs to the bacterial ribosomal protein bS18 family. As to quaternary structure, part of the 30S ribosomal subunit. Forms a tight heterodimer with protein bS6.

Its function is as follows. Binds as a heterodimer with protein bS6 to the central domain of the 16S rRNA, where it helps stabilize the platform of the 30S subunit. This is Small ribosomal subunit protein bS18 from Wigglesworthia glossinidia brevipalpis.